The primary structure comprises 61 residues: Large ribosomal subunit protein bL28 (61 aa).

It belongs to the bacterial ribosomal protein bL28 family.

This Nautilia profundicola (strain ATCC BAA-1463 / DSM 18972 / AmH) protein is Large ribosomal subunit protein bL28.